The chain runs to 28 residues: Mu-theraphotoxin-Hsp1a (28 aa).

3 disulfide bridges follow: cysteine 2/cysteine 16, cysteine 9/cysteine 21, and cysteine 15/cysteine 25. At asparagine 28 the chain carries Asparagine amide.

The protein belongs to the neurotoxin 30 (phrixotoxin) family. As to expression, expressed by the venom gland.

It localises to the secreted. Functionally, potent and selective inhibitor of Nav1.7/SCN9A sodium channels. Inhibits Nav1.7/SCN9A peak current (IC(50)=13 nM). In vivo, does not induce visible signs of toxicity when intravenously injected into mice. This chain is Mu-theraphotoxin-Hsp1a, found in Homoeomma sp. (Peruvian tarantula).